Reading from the N-terminus, the 372-residue chain is 18-hydroxynorfluorocurarine reductase (372 aa).

Residues C47, D50, H69, E70, C100, C103, C106, C114, and C172 each contribute to the Zn(2+) site. Residues 197–202 (GLGGIG), K226, 283–285 (LGA), S307, and R354 each bind NADP(+).

It belongs to the zinc-containing alcohol dehydrogenase family. Homodimer. Zn(2+) is required as a cofactor.

The enzyme catalyses (19E)-cur-19-en-17-al + NADP(+) = norfluorocurarine + NADPH + H(+). It catalyses the reaction 17,18-epoxy-17-hydroxycur-19-ene + NADP(+) = 18-hydroxynorfluorocurarine + NADPH + H(+). The protein operates within alkaloid biosynthesis. Functionally, alcohol dehydrogenase involved in the biosynthesis of curare monoterpene indole alkaloids (MIAs), natural products such as diaboline, a pharmacologically active compound used to regulate blood pressure. Curare alkaloids act as animal glycine receptor antagonists. Catalyzes the conversion of norfluorocurarine to desoxy Wieland-Gumlich aldehyde, and of 18-OH norfluorocurarine to Wieland-Gumlich aldehyde. In Strychnos sp, this protein is 18-hydroxynorfluorocurarine reductase.